The primary structure comprises 259 residues: Isoepoxydon dehydrogenase patN (259 aa).

Residues Asp-69, Asn-96, and Lys-125 each contribute to the NADP(+) site. Active-site proton donor residues include Ser-143 and Ser-144. Tyr-158, Lys-162, and Val-191 together coordinate NADP(+). Catalysis depends on Tyr-158, which acts as the Proton acceptor. Catalysis depends on Lys-162, which acts as the Lowers pKa of active site Tyr.

It belongs to the short-chain dehydrogenases/reductases (SDR) family.

Its subcellular location is the cytoplasm. It localises to the cytosol. It catalyses the reaction isoepoxydon + NADP(+) = phyllostine + NADPH + H(+). The protein operates within mycotoxin biosynthesis; patulin biosynthesis. Its function is as follows. Isoepoxydon dehydrogenase; part of the gene cluster that mediates the biosynthesis of patulin, an acetate-derived tetraketide mycotoxin produced by several fungal species that shows antimicrobial properties against several bacteria. PatN catalyzes the conversion of isoepoxydon into phyllostine. The pathway begins with the synthesis of 6-methylsalicylic acid by the polyketide synthase (PKS) patK via condensation of acetate and malonate units. The 6-methylsalicylic acid decarboxylase patG then catalyzes the decarboxylation of 6-methylsalicylic acid to yield m-cresol (also known as 3-methylphenol). These first reactions occur in the cytosol. The intermediate m-cresol is then transported into the endoplasmic reticulum where the cytochrome P450 monooxygenase patH converts it to m-hydroxybenzyl alcohol, which is further converted to gentisyl alcohol by the cytochrome P450 monooxygenase patI. The oxidoreductases patJ and patO further convert gentisyl alcohol to isoepoxydon in the vacuole. PatN catalyzes then the transformation of isoepoxydon into phyllostine. The cluster protein patF is responsible for the conversion from phyllostine to neopatulin whereas the alcohol dehydrogenase patD converts neopatulin to E-ascladiol. The steps between isoepoxydon and E-ascladiol occur in the cytosol, and E-ascladiol is probably secreted to the extracellular space by one of the cluster-specific transporters patC or patM. Finally, the secreted patulin synthase patE catalyzes the conversion of E-ascladiol to patulin. The sequence is that of Isoepoxydon dehydrogenase patN from Penicillium expansum (Blue mold rot fungus).